The following is a 189-amino-acid chain: Pyridoxal 5'-phosphate synthase subunit PdxT (189 aa).

46–48 (GES) is an L-glutamine binding site. Catalysis depends on cysteine 78, which acts as the Nucleophile. L-glutamine is bound by residues arginine 107 and 136 to 137 (IR). Active-site charge relay system residues include histidine 173 and glutamate 175.

The protein belongs to the glutaminase PdxT/SNO family. In the presence of PdxS, forms a dodecamer of heterodimers. Only shows activity in the heterodimer.

It catalyses the reaction aldehydo-D-ribose 5-phosphate + D-glyceraldehyde 3-phosphate + L-glutamine = pyridoxal 5'-phosphate + L-glutamate + phosphate + 3 H2O + H(+). The catalysed reaction is L-glutamine + H2O = L-glutamate + NH4(+). The protein operates within cofactor biosynthesis; pyridoxal 5'-phosphate biosynthesis. In terms of biological role, catalyzes the hydrolysis of glutamine to glutamate and ammonia as part of the biosynthesis of pyridoxal 5'-phosphate. The resulting ammonia molecule is channeled to the active site of PdxS. The protein is Pyridoxal 5'-phosphate synthase subunit PdxT of Roseiflexus castenholzii (strain DSM 13941 / HLO8).